Here is a 783-residue protein sequence, read N- to C-terminus: Rabenosyn-5 (783 aa).

Ala-2 carries the post-translational modification N-acetylalanine. Ser-3 is modified (phosphoserine). The C2H2-type zinc finger occupies 14-37; sequence FLCPLCLKDLQSFYQLQSHYEEEH. A necessary for the correct targeting to endosomes region spans residues 99–262; that stretch reads RSHLSDFKKH…HCKDKLLKRE (164 aa). The FYVE-type zinc-finger motif lies at 156-259; the sequence is DQDVPFCPDC…CCTHCKDKLL (104 aa). Zn(2+) is bound by residues Cys-162, Cys-165, Cys-178, Cys-181, Cys-186, and Cys-189. Positions 206 to 223 are enriched in polar residues; sequence KDSLSTHTSPSQSPNSVH. Positions 206–240 are disordered; that stretch reads KDSLSTHTSPSQSPNSVHGSRRGSISSMSSVSSVL. Phosphoserine occurs at positions 214, 218, 225, and 229. The segment covering 227–239 has biased composition (low complexity); that stretch reads RGSISSMSSVSSV. Residues Cys-251 and Cys-254 each coordinate Zn(2+). The tract at residues 263-499 is necessary for interaction with RAB4A; it reads QQMDEKEHTP…QLQDEYDQQQ (237 aa). The necessary for interaction with EHD1 stretch occupies residues 263 to 783; it reads QQMDEKEHTP…TLAKQKGAPN (521 aa). 2 coiled-coil regions span residues 377–412 and 471–531; these read TKEQ…KLEE and QAKA…ELER. 2 stretches are compositionally biased toward basic and acidic residues: residues 387–399 and 405–414; these read KRKQ…RTVE and ESRRKLEERQ. A disordered region spans residues 387–433; it reads KRKQDLEQKRTVERQAALESRRKLEERQSGLASHTANGDVRSLRGIP. A UIM domain is found at 495-514; sequence YDQQQTEKAIELSRKQAEEE. 2 disordered regions span residues 569 to 638 and 663 to 733; these read SYSL…SPTE and FEED…EEHI. 2 stretches are compositionally biased toward polar residues: residues 571–584 and 610–623; these read SLDQ…SSTA and TLPQ…SDKA. A necessary for interaction with RAB5A region spans residues 627 to 783; sequence PFDEDDLSSP…TLAKQKGAPN (157 aa). A compositionally biased stretch (acidic residues) spans 663-673; the sequence is FEEDAEEEEVA. Ser-686 carries the post-translational modification Phosphoserine. Residues 721 to 733 show a composition bias toward acidic residues; the sequence is VDSDSGMEAEEHI.

Interacts with EHD1, RAB4A, RAB5A, RAB22A, RAB24 and VPS45. Binds simultaneously to RAB4A and RAB5A in vitro. Interacts with RAB4A and RAB5A that has been activated by GTP binding.

Its subcellular location is the cell membrane. It localises to the early endosome membrane. Functionally, rab4/Rab5 effector protein acting in early endocytic membrane fusion and membrane trafficking of recycling endosomes. Required for endosome fusion either homotypically or with clathrin coated vesicles. Plays a role in the lysosomal trafficking of CTSD/cathepsin D from the Golgi to lysosomes. Also promotes the recycling of transferrin directly from early endosomes to the plasma membrane. Binds phospholipid vesicles containing phosphatidylinositol 3-phosphate (PtdInsP3). Plays a role in the recycling of transferrin receptor to the plasma membrane. The chain is Rabenosyn-5 from Mus musculus (Mouse).